A 72-amino-acid polypeptide reads, in one-letter code: Translation initiation factor IF-1 (72 aa).

The S1-like domain maps to 1 to 72 (MSKEEVLEFS…TKGRIIYRYK (72 aa)).

This sequence belongs to the IF-1 family. As to quaternary structure, component of the 30S ribosomal translation pre-initiation complex which assembles on the 30S ribosome in the order IF-2 and IF-3, IF-1 and N-formylmethionyl-tRNA(fMet); mRNA recruitment can occur at any time during PIC assembly.

The protein localises to the cytoplasm. One of the essential components for the initiation of protein synthesis. Stabilizes the binding of IF-2 and IF-3 on the 30S subunit to which N-formylmethionyl-tRNA(fMet) subsequently binds. Helps modulate mRNA selection, yielding the 30S pre-initiation complex (PIC). Upon addition of the 50S ribosomal subunit IF-1, IF-2 and IF-3 are released leaving the mature 70S translation initiation complex. The chain is Translation initiation factor IF-1 from Bartonella henselae (strain ATCC 49882 / DSM 28221 / CCUG 30454 / Houston 1) (Rochalimaea henselae).